The following is a 433-amino-acid chain: tRNA(Ile)-lysidine synthase (433 aa).

An ATP-binding site is contributed by 37-42; that stretch reads SGGKDS.

The protein belongs to the tRNA(Ile)-lysidine synthase family.

It is found in the cytoplasm. The enzyme catalyses cytidine(34) in tRNA(Ile2) + L-lysine + ATP = lysidine(34) in tRNA(Ile2) + AMP + diphosphate + H(+). In terms of biological role, ligates lysine onto the cytidine present at position 34 of the AUA codon-specific tRNA(Ile) that contains the anticodon CAU, in an ATP-dependent manner. Cytidine is converted to lysidine, thus changing the amino acid specificity of the tRNA from methionine to isoleucine. The protein is tRNA(Ile)-lysidine synthase of Leptospira interrogans serogroup Icterohaemorrhagiae serovar Lai (strain 56601).